Reading from the N-terminus, the 187-residue chain is MKLIILDRDGVINQDRDDFVKSVDEWIPVEGSMDAVAFLTQAGYTVAVATNQSGIGRKYFTVQNLTEMHAKMHRLVRQAGGEINGIWFCPHTDADNCNCRKPKPGMIEDIIGRFNAQASETWLVGDSLRDLQAIDAVGGKPALVLTGKGKKTLSQHGHELPEHTQVFDTLLDFSQYIMQENAAPQAD.

Asp-7 functions as the Nucleophile in the catalytic mechanism. Mg(2+) is bound by residues Asp-7 and Asp-9. Substrate is bound by residues 7–9 (DRD), 15–19 (DRDDF), and 50–53 (TNQS). Asp-9 acts as the Proton donor in catalysis. Zn(2+)-binding residues include Cys-89, His-91, Cys-97, and Cys-99. 100–101 (RK) provides a ligand contact to substrate. Asp-126 contacts Mg(2+).

It belongs to the GmhB family. Monomer. It depends on Mg(2+) as a cofactor. Zn(2+) serves as cofactor.

It localises to the cytoplasm. It catalyses the reaction D-glycero-beta-D-manno-heptose 1,7-bisphosphate + H2O = D-glycero-beta-D-manno-heptose 1-phosphate + phosphate. It participates in nucleotide-sugar biosynthesis; ADP-L-glycero-beta-D-manno-heptose biosynthesis; ADP-L-glycero-beta-D-manno-heptose from D-glycero-beta-D-manno-heptose 7-phosphate: step 2/4. The protein operates within bacterial outer membrane biogenesis; LOS core biosynthesis. Its function is as follows. Converts the D-glycero-beta-D-manno-heptose 1,7-bisphosphate intermediate into D-glycero-beta-D-manno-heptose 1-phosphate by removing the phosphate group at the C-7 position. The chain is D-glycero-beta-D-manno-heptose-1,7-bisphosphate 7-phosphatase (gmhB) from Neisseria meningitidis serogroup A / serotype 4A (strain DSM 15465 / Z2491).